The sequence spans 371 residues: Protein-glutamate methylesterase/protein-glutamine glutaminase 3 (371 aa).

The region spanning 5-120 (RVVVIDDSAY…SEEILTIRED (116 aa)) is the Response regulatory domain. The residue at position 56 (aspartate 56) is a 4-aspartylphosphate. One can recognise a CheB-type methylesterase domain in the interval 174–362 (PAGRLEVVAI…LDRMSREIIQ (189 aa)). Catalysis depends on residues serine 186, histidine 213, and aspartate 309.

Belongs to the CheB family. Phosphorylated by CheA. Phosphorylation of the N-terminal regulatory domain activates the methylesterase activity.

It is found in the cytoplasm. The enzyme catalyses [protein]-L-glutamate 5-O-methyl ester + H2O = L-glutamyl-[protein] + methanol + H(+). It carries out the reaction L-glutaminyl-[protein] + H2O = L-glutamyl-[protein] + NH4(+). Involved in chemotaxis. Part of a chemotaxis signal transduction system that modulates chemotaxis in response to various stimuli. Catalyzes the demethylation of specific methylglutamate residues introduced into the chemoreceptors (methyl-accepting chemotaxis proteins or MCP) by CheR. Also mediates the irreversible deamidation of specific glutamine residues to glutamic acid. This is Protein-glutamate methylesterase/protein-glutamine glutaminase 3 from Geobacter sulfurreducens (strain ATCC 51573 / DSM 12127 / PCA).